The chain runs to 76 residues: Cytochrome c oxidase subunit 6C-1 (76 aa).

Residues 4-14 (GALLPKPQMHD) are Mitochondrial matrix-facing. A helical transmembrane segment spans residues 15–55 (PLSKRLWVHIVGAFIVDLGVAAAHKFGAAKPRKKAYADFYR). Topologically, residues 56-76 (NHDPMKDFDEMRKAGVFRSVK) are mitochondrial intermembrane.

Belongs to the cytochrome c oxidase subunit 6c family. Component of the cytochrome c oxidase (complex IV, CIV), a multisubunit enzyme composed of 14 subunits. The complex is composed of a catalytic core of 3 subunits MT-CO1, MT-CO2 and MT-CO3, encoded in the mitochondrial DNA, and 11 supernumerary subunits COX4I, COX5A, COX5B, COX6A, COX6B, COX6C, COX7A, COX7B, COX7C, COX8 and NDUFA4, which are encoded in the nuclear genome. The complex exists as a monomer or a dimer and forms supercomplexes (SCs) in the inner mitochondrial membrane with NADH-ubiquinone oxidoreductase (complex I, CI) and ubiquinol-cytochrome c oxidoreductase (cytochrome b-c1 complex, complex III, CIII), resulting in different assemblies (supercomplex SCI(1)III(2)IV(1) and megacomplex MCI(2)III(2)IV(2)).

The protein localises to the mitochondrion inner membrane. It participates in energy metabolism; oxidative phosphorylation. Its function is as follows. Component of the cytochrome c oxidase, the last enzyme in the mitochondrial electron transport chain which drives oxidative phosphorylation. The respiratory chain contains 3 multisubunit complexes succinate dehydrogenase (complex II, CII), ubiquinol-cytochrome c oxidoreductase (cytochrome b-c1 complex, complex III, CIII) and cytochrome c oxidase (complex IV, CIV), that cooperate to transfer electrons derived from NADH and succinate to molecular oxygen, creating an electrochemical gradient over the inner membrane that drives transmembrane transport and the ATP synthase. Cytochrome c oxidase is the component of the respiratory chain that catalyzes the reduction of oxygen to water. Electrons originating from reduced cytochrome c in the intermembrane space (IMS) are transferred via the dinuclear copper A center (CU(A)) of subunit 2 and heme A of subunit 1 to the active site in subunit 1, a binuclear center (BNC) formed by heme A3 and copper B (CU(B)). The BNC reduces molecular oxygen to 2 water molecules using 4 electrons from cytochrome c in the IMS and 4 protons from the mitochondrial matrix. In Rattus norvegicus (Rat), this protein is Cytochrome c oxidase subunit 6C-1 (Cox6c1).